Reading from the N-terminus, the 240-residue chain is Large ribosomal subunit protein uL2 (240 aa).

A compositionally biased stretch (polar residues) spans 1-11 (MGKRLISQNRG). Disordered regions lie at residues 1-28 (MGKR…KGAV) and 206-240 (GGGR…TGRK). Composition is skewed to basic residues over residues 13 to 28 (GTPK…KGAV) and 224 to 240 (SPGR…TGRK).

Belongs to the universal ribosomal protein uL2 family. Part of the 50S ribosomal subunit. Forms a bridge to the 30S subunit in the 70S ribosome.

Its function is as follows. One of the primary rRNA binding proteins. Required for association of the 30S and 50S subunits to form the 70S ribosome, for tRNA binding and peptide bond formation. It has been suggested to have peptidyltransferase activity; this is somewhat controversial. Makes several contacts with the 16S rRNA in the 70S ribosome. This chain is Large ribosomal subunit protein uL2, found in Methanococcus maripaludis (strain C7 / ATCC BAA-1331).